A 142-amino-acid chain; its full sequence is Transcriptional regulator MraZ (142 aa).

SpoVT-AbrB domains follow at residues 5 to 47 (EYNH…PLGE) and 76 to 119 (ANEV…SKEK).

Belongs to the MraZ family. Forms oligomers.

It is found in the cytoplasm. The protein resides in the nucleoid. This Clostridium acetobutylicum (strain ATCC 824 / DSM 792 / JCM 1419 / IAM 19013 / LMG 5710 / NBRC 13948 / NRRL B-527 / VKM B-1787 / 2291 / W) protein is Transcriptional regulator MraZ.